A 118-amino-acid polypeptide reads, in one-letter code: Large ribosomal subunit protein eL18 (118 aa).

It belongs to the eukaryotic ribosomal protein eL18 family.

The chain is Large ribosomal subunit protein eL18 from Nanoarchaeum equitans (strain Kin4-M).